A 472-amino-acid chain; its full sequence is Exodeoxyribonuclease 7 large subunit (472 aa).

This sequence belongs to the XseA family. Heterooligomer composed of large and small subunits.

The protein localises to the cytoplasm. The catalysed reaction is Exonucleolytic cleavage in either 5'- to 3'- or 3'- to 5'-direction to yield nucleoside 5'-phosphates.. Bidirectionally degrades single-stranded DNA into large acid-insoluble oligonucleotides, which are then degraded further into small acid-soluble oligonucleotides. This is Exodeoxyribonuclease 7 large subunit from Carboxydothermus hydrogenoformans (strain ATCC BAA-161 / DSM 6008 / Z-2901).